The sequence spans 285 residues: Pantothenate synthetase (285 aa).

Position 33–40 (33–40 (MGALHEGH)) interacts with ATP. The Proton donor role is filled by His40. Gln64 is a binding site for (R)-pantoate. Residue Gln64 participates in beta-alanine binding. 150–153 (GEKD) is a binding site for ATP. Gln156 serves as a coordination point for (R)-pantoate. ATP contacts are provided by residues Ala179 and 187 to 190 (LSSR).

It belongs to the pantothenate synthetase family. Homodimer.

The protein resides in the cytoplasm. It carries out the reaction (R)-pantoate + beta-alanine + ATP = (R)-pantothenate + AMP + diphosphate + H(+). The protein operates within cofactor biosynthesis; (R)-pantothenate biosynthesis; (R)-pantothenate from (R)-pantoate and beta-alanine: step 1/1. Its function is as follows. Catalyzes the condensation of pantoate with beta-alanine in an ATP-dependent reaction via a pantoyl-adenylate intermediate. The sequence is that of Pantothenate synthetase from Caulobacter vibrioides (strain ATCC 19089 / CIP 103742 / CB 15) (Caulobacter crescentus).